A 565-amino-acid chain; its full sequence is Dihydroxy-acid dehydratase (565 aa).

Asp80 serves as a coordination point for Mg(2+). Position 121 (Cys121) interacts with [2Fe-2S] cluster. Residues Asp122 and Lys123 each contribute to the Mg(2+) site. Lys123 carries the post-translational modification N6-carboxylysine. [2Fe-2S] cluster is bound at residue Cys194. Glu447 is a binding site for Mg(2+). The Proton acceptor role is filled by Ser473.

The protein belongs to the IlvD/Edd family. Homodimer. It depends on [2Fe-2S] cluster as a cofactor. The cofactor is Mg(2+).

It carries out the reaction (2R)-2,3-dihydroxy-3-methylbutanoate = 3-methyl-2-oxobutanoate + H2O. The catalysed reaction is (2R,3R)-2,3-dihydroxy-3-methylpentanoate = (S)-3-methyl-2-oxopentanoate + H2O. The protein operates within amino-acid biosynthesis; L-isoleucine biosynthesis; L-isoleucine from 2-oxobutanoate: step 3/4. It functions in the pathway amino-acid biosynthesis; L-valine biosynthesis; L-valine from pyruvate: step 3/4. Its function is as follows. Functions in the biosynthesis of branched-chain amino acids. Catalyzes the dehydration of (2R,3R)-2,3-dihydroxy-3-methylpentanoate (2,3-dihydroxy-3-methylvalerate) into 2-oxo-3-methylpentanoate (2-oxo-3-methylvalerate) and of (2R)-2,3-dihydroxy-3-methylbutanoate (2,3-dihydroxyisovalerate) into 2-oxo-3-methylbutanoate (2-oxoisovalerate), the penultimate precursor to L-isoleucine and L-valine, respectively. The sequence is that of Dihydroxy-acid dehydratase from Pelodictyon phaeoclathratiforme (strain DSM 5477 / BU-1).